Consider the following 283-residue polypeptide: Putative S-adenosyl-L-methionine-dependent methyltransferase SCO7813 (283 aa).

S-adenosyl-L-methionine contacts are provided by residues Asp121 and 150 to 151 (DL). The segment at 264–283 (MSTLPQHEDGPGGLISAVRR) is disordered.

This sequence belongs to the UPF0677 family.

In terms of biological role, exhibits S-adenosyl-L-methionine-dependent methyltransferase activity. In Streptomyces coelicolor (strain ATCC BAA-471 / A3(2) / M145), this protein is Putative S-adenosyl-L-methionine-dependent methyltransferase SCO7813.